A 155-amino-acid polypeptide reads, in one-letter code: Ribonuclease H (155 aa).

One can recognise an RNase H type-1 domain in the interval 1–143; that stretch reads MNQVEIYTDG…ADALANRGVD (143 aa). The Mg(2+) site is built by D9, E47, D69, and D135.

The protein belongs to the RNase H family. As to quaternary structure, monomer. It depends on Mg(2+) as a cofactor.

It localises to the cytoplasm. It catalyses the reaction Endonucleolytic cleavage to 5'-phosphomonoester.. Its function is as follows. Endonuclease that specifically degrades the RNA of RNA-DNA hybrids. The sequence is that of Ribonuclease H from Verminephrobacter eiseniae (strain EF01-2).